The primary structure comprises 344 residues: GTP 3',8-cyclase (344 aa).

The 226-residue stretch at 19 to 244 (PFARPITYLR…TPLAERTGGP (226 aa)) folds into the Radical SAM core domain. Arg28 provides a ligand contact to GTP. Residues Cys35 and Cys39 each contribute to the [4Fe-4S] cluster site. Residue Tyr41 participates in S-adenosyl-L-methionine binding. [4Fe-4S] cluster is bound at residue Cys42. Arg77 provides a ligand contact to GTP. Position 81 (Gly81) interacts with S-adenosyl-L-methionine. Thr110 contacts GTP. Ser134 serves as a coordination point for S-adenosyl-L-methionine. Lys170 serves as a coordination point for GTP. S-adenosyl-L-methionine is bound at residue Met204. Residues Cys268 and Cys271 each contribute to the [4Fe-4S] cluster site. GTP is bound at residue 273–275 (RVR). Cys285 contributes to the [4Fe-4S] cluster binding site.

The protein belongs to the radical SAM superfamily. MoaA family. As to quaternary structure, monomer and homodimer. Requires [4Fe-4S] cluster as cofactor.

It catalyses the reaction GTP + AH2 + S-adenosyl-L-methionine = (8S)-3',8-cyclo-7,8-dihydroguanosine 5'-triphosphate + 5'-deoxyadenosine + L-methionine + A + H(+). It functions in the pathway cofactor biosynthesis; molybdopterin biosynthesis. Functionally, catalyzes the cyclization of GTP to (8S)-3',8-cyclo-7,8-dihydroguanosine 5'-triphosphate. In Paracoccus denitrificans (strain Pd 1222), this protein is GTP 3',8-cyclase.